The primary structure comprises 1035 residues: NHS-like protein 3 (1035 aa).

V2 carries N-myristoyl glycine lipidation. Disordered stretches follow at residues K23–E44, Q76–N105, and I133–T162. Over residues Q76–D90 the composition is skewed to basic and acidic residues. S93, S138, S145, and S161 each carry phosphoserine. The residue at position 162 (T162) is a Phosphothreonine. At S215 the chain carries Phosphoserine. Residue R320 is modified to Asymmetric dimethylarginine. Phosphoserine occurs at positions 322, 327, 330, 338, 339, 341, and 342. Disordered regions lie at residues R332 to S869 and S885 to A1035. A compositionally biased stretch (low complexity) spans S338–T365. The span at I366–A388 shows a compositional bias: polar residues. Phosphoserine occurs at positions 400, 404, and 409. Polar residues predominate over residues A411–S429. Residues S431 to H449 are compositionally biased toward basic residues. Residues R517–P532 show a composition bias toward low complexity. T531 carries the phosphothreonine modification. A compositionally biased stretch (pro residues) spans P543–P552. Residue S545 is modified to Phosphoserine. Residues S562–P589 are compositionally biased toward low complexity. T593 bears the Phosphothreonine mark. Residues P602–A624 show a composition bias toward pro residues. A Phosphoserine modification is found at S612. 2 stretches are compositionally biased toward low complexity: residues A625–P645 and Q652–P662. A phosphoserine mark is found at S669 and S673. Pro residues-rich tracts occupy residues S669 to T685 and N709 to P718. A compositionally biased stretch (low complexity) spans S737–A765. Positions P771–A784 are enriched in pro residues. Over residues G838–A848 the composition is skewed to low complexity. 3 positions are modified to phosphoserine: S858, S862, and S868. Over residues N894 to S906 the composition is skewed to pro residues. 4 positions are modified to phosphoserine: S929, S959, S971, and S979. The segment covering K961–P980 has biased composition (pro residues). Residues T999 to A1008 are compositionally biased toward basic and acidic residues.

In terms of tissue distribution, expressed in lung.

Functionally, able to directly activate the TNF-NFkappaB signaling pathway. This Homo sapiens (Human) protein is NHS-like protein 3.